The following is a 673-amino-acid chain: Methionine--tRNA ligase (673 aa).

Positions 14–24 (YYPSGKLHIGN) match the 'HIGH' region motif. Positions 310 to 314 (KMSKS) match the 'KMSKS' region motif. An ATP-binding site is contributed by Lys-313. The region spanning 571-673 (VFDKVELKVA…SEAPNGSSIS (103 aa)) is the tRNA-binding domain.

Belongs to the class-I aminoacyl-tRNA synthetase family. MetG type 2B subfamily. In terms of assembly, homodimer.

It is found in the cytoplasm. It carries out the reaction tRNA(Met) + L-methionine + ATP = L-methionyl-tRNA(Met) + AMP + diphosphate. Its function is as follows. Is required not only for elongation of protein synthesis but also for the initiation of all mRNA translation through initiator tRNA(fMet) aminoacylation. This chain is Methionine--tRNA ligase (metG), found in Oceanobacillus iheyensis (strain DSM 14371 / CIP 107618 / JCM 11309 / KCTC 3954 / HTE831).